The sequence spans 267 residues: GTP cyclohydrolase MptA (267 aa).

This sequence belongs to the GTP cyclohydrolase IV family. Homodimer. Requires Fe(2+) as cofactor.

The enzyme catalyses GTP + H2O = 7,8-dihydroneopterin 2',3'-cyclic phosphate + formate + diphosphate + H(+). The protein operates within cofactor biosynthesis; 5,6,7,8-tetrahydromethanopterin biosynthesis. Its function is as follows. Converts GTP to 7,8-dihydro-D-neopterin 2',3'-cyclic phosphate, the first intermediate in the biosynthesis of coenzyme methanopterin. In Thermococcus kodakarensis (strain ATCC BAA-918 / JCM 12380 / KOD1) (Pyrococcus kodakaraensis (strain KOD1)), this protein is GTP cyclohydrolase MptA.